The sequence spans 342 residues: tRNA-specific 2-thiouridylase MnmA (342 aa).

Residues 6-13 (LLSGGVDS) and leucine 32 contribute to the ATP site. Residue cysteine 92 is the Nucleophile of the active site. Cysteine 92 and cysteine 191 form a disulfide bridge. Residue glycine 116 participates in ATP binding. The interval 138-140 (KDQ) is interaction with tRNA. Residue cysteine 191 is the Cysteine persulfide intermediate of the active site. The interval 293–294 (RY) is interaction with tRNA.

This sequence belongs to the MnmA/TRMU family.

Its subcellular location is the cytoplasm. The catalysed reaction is S-sulfanyl-L-cysteinyl-[protein] + uridine(34) in tRNA + AH2 + ATP = 2-thiouridine(34) in tRNA + L-cysteinyl-[protein] + A + AMP + diphosphate + H(+). Functionally, catalyzes the 2-thiolation of uridine at the wobble position (U34) of tRNA, leading to the formation of s(2)U34. This is tRNA-specific 2-thiouridylase MnmA from Helicobacter pylori (strain G27).